A 422-amino-acid polypeptide reads, in one-letter code: UDP-N-acetylglucosamine 1-carboxyvinyltransferase (422 aa).

22-23 (KN) lines the phosphoenolpyruvate pocket. Arginine 93 contributes to the UDP-N-acetyl-alpha-D-glucosamine binding site. Residue cysteine 117 is the Proton donor of the active site. 2-(S-cysteinyl)pyruvic acid O-phosphothioketal is present on cysteine 117. Residues 122–126 (RPVDL), aspartate 308, and leucine 330 each bind UDP-N-acetyl-alpha-D-glucosamine.

Belongs to the EPSP synthase family. MurA subfamily.

The protein resides in the cytoplasm. It catalyses the reaction phosphoenolpyruvate + UDP-N-acetyl-alpha-D-glucosamine = UDP-N-acetyl-3-O-(1-carboxyvinyl)-alpha-D-glucosamine + phosphate. The protein operates within cell wall biogenesis; peptidoglycan biosynthesis. In terms of biological role, cell wall formation. Adds enolpyruvyl to UDP-N-acetylglucosamine. In Helicobacter acinonychis (strain Sheeba), this protein is UDP-N-acetylglucosamine 1-carboxyvinyltransferase.